Here is a 104-residue protein sequence, read N- to C-terminus: Large ribosomal subunit protein uL24 (104 aa).

It belongs to the universal ribosomal protein uL24 family. In terms of assembly, part of the 50S ribosomal subunit.

In terms of biological role, one of two assembly initiator proteins, it binds directly to the 5'-end of the 23S rRNA, where it nucleates assembly of the 50S subunit. Functionally, one of the proteins that surrounds the polypeptide exit tunnel on the outside of the subunit. This Shewanella amazonensis (strain ATCC BAA-1098 / SB2B) protein is Large ribosomal subunit protein uL24.